A 436-amino-acid polypeptide reads, in one-letter code: Ribosomal protein uS12 methylthiotransferase RimO (436 aa).

The 119-residue stretch at 4-122 (KRIDIITLGC…LLQDLGKTYH (119 aa)) folds into the MTTase N-terminal domain. Residues C13, C51, C85, C146, C150, and C153 each coordinate [4Fe-4S] cluster. In terms of domain architecture, Radical SAM core spans 132–363 (TTPKHYAYLK…MDIQQGISAE (232 aa)). Residues 366–433 (AAKIGQQMKV…DFDLYAKILN (68 aa)) enclose the TRAM domain.

It belongs to the methylthiotransferase family. RimO subfamily. The cofactor is [4Fe-4S] cluster.

The protein localises to the cytoplasm. It catalyses the reaction L-aspartate(89)-[ribosomal protein uS12]-hydrogen + (sulfur carrier)-SH + AH2 + 2 S-adenosyl-L-methionine = 3-methylsulfanyl-L-aspartate(89)-[ribosomal protein uS12]-hydrogen + (sulfur carrier)-H + 5'-deoxyadenosine + L-methionine + A + S-adenosyl-L-homocysteine + 2 H(+). Functionally, catalyzes the methylthiolation of an aspartic acid residue of ribosomal protein uS12. This Bacteroides thetaiotaomicron (strain ATCC 29148 / DSM 2079 / JCM 5827 / CCUG 10774 / NCTC 10582 / VPI-5482 / E50) protein is Ribosomal protein uS12 methylthiotransferase RimO.